The chain runs to 83 residues: Small ribosomal subunit protein bS16 (83 aa).

This sequence belongs to the bacterial ribosomal protein bS16 family.

This chain is Small ribosomal subunit protein bS16, found in Verminephrobacter eiseniae (strain EF01-2).